The primary structure comprises 539 residues: Chloride channel CLIC-like protein 1 (539 aa).

An N-terminal signal peptide occupies residues 1–18 (MLCRLLLCECLLLITGYA). At 19–184 (HDDDWIDPTD…EDYFGVDPYN (166 aa)) the chain is on the lumenal side. Positions 41 to 61 (KSQVRSGTSEKKEVSPDSSEA) are disordered. The chain crosses the membrane as a helical span at residues 185-205 (VFMVLLCLLCLVVLVATELWT). At 206–215 (YVRWYTQMKR) the chain is on the cytoplasmic side. The helical transmembrane segment at 216 to 236 (IFIISFLLSLAWNWIYLYKMA) threads the bilayer. Residues 237-329 (FAQHQANIAG…GEFIKALMKE (93 aa)) lie on the Lumenal side of the membrane. A helical transmembrane segment spans residues 330 to 350 (IPVLLQIPVLAILALAVLSFC). The Cytoplasmic segment spans residues 351-539 (YGAGRSVPML…GTEPVSSPCG (189 aa)). The segment at 361 to 410 (RHFGGPDREPPRALEPDDRRRQKGLDYRLHGGAGDADFSYRGPAGSIEQG) is disordered. The segment covering 364-389 (GGPDREPPRALEPDDRRRQKGLDYRL) has biased composition (basic and acidic residues). A phosphoserine mark is found at S429, S433, and S459. Residues 444 to 539 (DTEAQEHPEV…GTEPVSSPCG (96 aa)) are disordered. The span at 475–485 (STPTEYSQSAK) shows a compositional bias: polar residues. T476 bears the Phosphothreonine mark. A phosphoserine mark is found at S498, S513, and S521. Positions 512 to 521 (CSPPGGCPPS) are enriched in low complexity.

The protein belongs to the chloride channel MCLC family. Homomultimers. Interacts with mitochondrial protein PIGBOS1 (via C-terminus); the interaction occurs at the mitochondria-associated endoplasmic reticulum (ER) membrane, a zone of contact between the ER and mitochondrial membranes, but does not appear to play a role in ER-mitochondria tethering and is not affected by ER stress. Interacts with CALR. Expressed in cerebellum (at protein level).

It localises to the endoplasmic reticulum membrane. The catalysed reaction is chloride(in) = chloride(out). It carries out the reaction bromide(in) = bromide(out). The enzyme catalyses nitrate(in) = nitrate(out). It catalyses the reaction fluoride(in) = fluoride(out). Its activity is regulated as follows. Activated by membrane phosphatidylinositol 4,5-bisphosphate (PI(4,5)P2, PIP2). Inhibited by lumenal Ca(2+). Anion-selective channel with Ca(2+)-dependent and voltage-independent gating. Permeable to small monovalent anions with selectivity for bromide &gt; chloride &gt; nitrate &gt; fluoride. Operates in the endoplasmic reticulum (ER) membrane where it mediates chloride efflux to compensate for the loss of positive charges from the ER lumen upon Ca(2+) release. Contributes to the maintenance of ER Ca(2+) pools and activation of unfolded protein response to prevent accumulation of misfolded proteins in the ER lumen. Particularly involved in ER homeostasis mechanisms underlying motor neurons and retinal photoreceptors survival. The chain is Chloride channel CLIC-like protein 1 from Mus musculus (Mouse).